A 136-amino-acid chain; its full sequence is Protein PsiE homolog (136 aa).

Helical transmembrane passes span 15–35 (ILQT…VVFL), 55–75 (YELV…ALIV), 82–102 (FHFP…RLII), and 108–128 (PLDV…LWLC).

The protein belongs to the PsiE family.

The protein resides in the cell inner membrane. In Enterobacter sp. (strain 638), this protein is Protein PsiE homolog.